A 60-amino-acid polypeptide reads, in one-letter code: Large ribosomal subunit protein uL30 (60 aa).

The protein belongs to the universal ribosomal protein uL30 family. Part of the 50S ribosomal subunit.

This is Large ribosomal subunit protein uL30 from Pseudoalteromonas translucida (strain TAC 125).